Reading from the N-terminus, the 330-residue chain is Ferredoxin--NADP reductase (330 aa).

Residues E35, Q43, Y48, V90, F123, D285, and T326 each contribute to the FAD site.

The protein belongs to the ferredoxin--NADP reductase type 2 family. Homodimer. Requires FAD as cofactor.

The catalysed reaction is 2 reduced [2Fe-2S]-[ferredoxin] + NADP(+) + H(+) = 2 oxidized [2Fe-2S]-[ferredoxin] + NADPH. In Streptococcus pyogenes serotype M3 (strain ATCC BAA-595 / MGAS315), this protein is Ferredoxin--NADP reductase.